Reading from the N-terminus, the 139-residue chain is Myosin light chain kinase, smooth muscle (139 aa).

The disordered stretch occupies residues 48–97; the sequence is APTGENAKAPEMKARRPKSSLPPVLGTESDATVKKKPAPKTPPKAAMPPQ.

This sequence belongs to the protein kinase superfamily. CAMK Ser/Thr protein kinase family. As to quaternary structure, interacts with SVIL. The C-terminus is deglutamylated by AGTPBP1/CCP1, AGBL1/CCP4 and AGBL4/CCP6, leading to the formation of Myosin light chain kinase, smooth muscle, deglutamylated form. The consequences of C-terminal deglutamylation are unknown.

The catalysed reaction is L-seryl-[myosin light chain] + ATP = O-phospho-L-seryl-[myosin light chain] + ADP + H(+). The enzyme catalyses L-threonyl-[myosin light chain] + ATP = O-phospho-L-threonyl-[myosin light chain] + ADP + H(+). Phosphorylates a specific serine in the N-terminus of a myosin light chain. Also regulates actin-myosin interaction through a non-kinase activity. The sequence is that of Myosin light chain kinase, smooth muscle (MYLK) from Sus scrofa (Pig).